The primary structure comprises 358 residues: CCAAT/enhancer-binding protein alpha (358 aa).

Residues 1 to 55 (MESADFYEAEPRPPMSSHLQSPPHAPSSAAFGFPRGAGPAQPPAPPAAPEPLGGI) form a disordered region. The tract at residues 1–70 (MESADFYEAE…SIDISAYIDP (70 aa)) is required to repress E2F1:TFDP1-mediated transcription, to inhibit cell cycle and to induce adipocyte differentiation. Residues 29–39 (AAFGFPRGAGP) are compositionally biased toward low complexity. The span at 40 to 49 (AQPPAPPAAP) shows a compositional bias: pro residues. Residues 54 to 72 (GICEHETSIDISAYIDPAA) are required for interaction with TRIB1. Residues 128–204 (PPGYGCAAAG…HPPPAHLAAP (77 aa)) are required to induce adipocyte differentiation. Position 161 is an N6-acetyllysine; alternate (Lys-161). Residue Lys-161 forms a Glycyl lysine isopeptide (Lys-Gly) (interchain with G-Cter in SUMO2); alternate linkage. Disordered stretches follow at residues 178–201 (LFPYQPPPPPPPSHPHPHPPPAHL) and 217–291 (TMHL…RRER). 2 stretches are compositionally biased toward pro residues: residues 181–199 (YQPPPPPPPSHPHPHPPPA) and 224–238 (HPTPPPTPVPSPHPA). Residues 182–198 (QPPPPPPPSHPHPHPPP) are required to functionally cooperate with SREBF1 in promoter activation. Ser-190 is subject to Phosphoserine. 2 positions are modified to phosphothreonine; by GSK3: Thr-226 and Thr-230. Residue Ser-234 is modified to Phosphoserine; by GSK3. The span at 239–259 (PALGAAGLPGPGSALKGLGAA) shows a compositional bias: low complexity. The interval 244-358 (AGLPGPGSAL…SLVKAMGNCA (115 aa)) is interaction with FOXO1. Residues 276–291 (KSVDKNSNEYRVRRER) are compositionally biased toward basic and acidic residues. The bZIP domain occupies 282 to 345 (SNEYRVRRER…DTLRGIFRQL (64 aa)). The DNA-binding element occupies 285–300 (YRVRRERNNIAVRKSR). A basic motif region spans residues 286 to 313 (RVRRERNNIAVRKSRDKAKQRNVETQQK). A leucine-zipper region spans residues 317–345 (LTSDNDRLRKRVEQLSRELDTLRGIFRQL).

This sequence belongs to the bZIP family. C/EBP subfamily. In terms of assembly, binds DNA as a homodimer and as a heterodimer. Can form stable heterodimers with CEBPB, CEBPD, CEBPE and CEBPG. Interacts with PRDM16. Interacts with UBN1. Interacts with ZNF638; this interaction increases transcriptional activation. Interacts with the complex TFDP2:E2F1; the interaction prevents CEBPA binding to target gene promoters and represses its transcriptional activity. Interacts with RB1. Interacts (when phosphorylated at Ser-190) with CDK2, CDK4, E2F4 and SMARCA2. Interacts with SREBPF1. Interacts with FOXO1 (via the Fork-head domain); the interaction increases when FOXO1 is deacetylated. Interacts with SIX1. Interacts (via recognition sequence) with TRIB1. Interacts (via bZIP domain) with OVOL2 (via zinc-finger domains); the interaction inhibits the transcription factor activity of CEBPA and is required to repress adipogenesis. Interacts with TAF1A and UBTF. As to quaternary structure, interacts with TAF1A and UBTF. Interacts with NPM1. In terms of assembly, (Microbial infection) Interacts with HBV protein X. (Microbial infection) Interacts with Epstein-Barr virus lytic switch protein BZLF1; this interaction induces G1 cell cycle arrest. Phosphorylation at Ser-190 is required for interaction with CDK2, CDK4 and SWI/SNF complex leading to cell cycle inhibition. Dephosphorylated at Ser-190 by protein phosphatase 2A (PP2A) through PI3K/AKT signaling pathway regulation. Phosphorylation at Thr-226 and Thr-230 by GSK3 is constitutive in adipose tissue and lung. In liver, both Thr-226 and Thr-230 are phosphorylated only during feeding but not during fasting. Phosphorylation of the GSK3 consensus sites selectively decreases transactivation activity on IRE-controlled promoters. In terms of processing, sumoylated, sumoylation blocks the inhibitory effect on cell proliferation by disrupting the interaction with SMARCA2. Post-translationally, ubiquitinated by COP1 upon interaction with TRIB1.

The protein resides in the nucleus. The protein localises to the nucleolus. Its function is as follows. Transcription factor that coordinates proliferation arrest and the differentiation of myeloid progenitors, adipocytes, hepatocytes, and cells of the lung and the placenta. Binds directly to the consensus DNA sequence 5'-T[TG]NNGNAA[TG]-3' acting as an activator on distinct target genes. During early embryogenesis, plays essential and redundant functions with CEBPB. Essential for the transition from common myeloid progenitors (CMP) to granulocyte/monocyte progenitors (GMP). Critical for the proper development of the liver and the lung. Necessary for terminal adipocyte differentiation, is required for postnatal maintenance of systemic energy homeostasis and lipid storage. To regulate these different processes at the proper moment and tissue, interplays with other transcription factors and modulators. Down-regulates the expression of genes that maintain cells in an undifferentiated and proliferative state through E2F1 repression, which is critical for its ability to induce adipocyte and granulocyte terminal differentiation. Reciprocally E2F1 blocks adipocyte differentiation by binding to specific promoters and repressing CEBPA binding to its target gene promoters. Proliferation arrest also depends on a functional binding to SWI/SNF complex. In liver, regulates gluconeogenesis and lipogenesis through different mechanisms. To regulate gluconeogenesis, functionally cooperates with FOXO1 binding to IRE-controlled promoters and regulating the expression of target genes such as PCK1 or G6PC1. To modulate lipogenesis, interacts and transcriptionally synergizes with SREBF1 in promoter activation of specific lipogenic target genes such as ACAS2. In adipose tissue, seems to act as FOXO1 coactivator accessing to ADIPOQ promoter through FOXO1 binding sites. Can act as dominant-negative. Binds DNA and have transctivation activity, even if much less efficiently than isoform 2. Does not inhibit cell proliferation. Functionally, directly and specifically enhances ribosomal DNA transcription interacting with RNA polymerase I-specific cofactors and inducing histone acetylation. The polypeptide is CCAAT/enhancer-binding protein alpha (Homo sapiens (Human)).